The chain runs to 23 residues: NLMQFELLIMKVAGRSGIVWYSD.

Ca(2+) is required as a cofactor. Contains 7 disulfide bonds. Expressed by the venom gland.

The protein resides in the secreted. It catalyses the reaction a 1,2-diacyl-sn-glycero-3-phosphocholine + H2O = a 1-acyl-sn-glycero-3-phosphocholine + a fatty acid + H(+). Its function is as follows. Snake venom phospholipase A2 (PLA2) that shows a moderate inhibition of ADP-induced human platelet aggregation when tested on platelet rich plasma. Exhibits moderate hydrolytic activities and prefers the anionic micelles (dPPC with deoxycholate) to the zwitterionic micelles (dPPC with Triton X-100). PLA2 catalyzes the calcium-dependent hydrolysis of the 2-acyl groups in 3-sn-phosphoglycerides. The polypeptide is Acidic phospholipase A2 CTs-A2 (Trimeresurus stejnegeri (Chinese green tree viper)).